We begin with the raw amino-acid sequence, 226 residues long: MKDIRIAIDGPASSGKSTVAKIIAKNLGYTYLDTGAMYRSATYLALQNGLTEENVPEILDQLSQNPISFGKAADGSPKVYVGDVDITHPIRDNQVTNNVSWVAAIPEVRQELVSQQQRIAQEGGIIMDGRDIGTVVLPDAELKIFMIASVDERAERRYKENIEKGIPADLETLKKEIAERDYKDSHREVSPLRPAEDAITFDTTGVSIDGVVEFIQEKAKKIIDKG.

ATP is bound at residue 10 to 18; that stretch reads GPASSGKST.

It belongs to the cytidylate kinase family. Type 1 subfamily.

The protein localises to the cytoplasm. The catalysed reaction is CMP + ATP = CDP + ADP. It catalyses the reaction dCMP + ATP = dCDP + ADP. The chain is Cytidylate kinase from Streptococcus thermophilus (strain CNRZ 1066).